The chain runs to 298 residues: Flavin-dependent thymidylate synthase (298 aa).

Residues 41–251 (GFVRLVDYMG…PLTYAAFVEY (211 aa)) enclose the ThyX domain. FAD-binding positions include Thr87, 110–112 (RHR), and Glu118. DUMP-binding positions include 107 to 110 (QWVR), 118 to 122 (EYSAR), and Arg190. Residues 110-120 (RHRTANVNEYS) carry the ThyX motif motif. FAD-binding positions include 206–208 (DLH) and His212. Residue Arg217 participates in dUMP binding. Arg217 acts as the Involved in ionization of N3 of dUMP, leading to its activation in catalysis.

Belongs to the thymidylate synthase ThyX family. As to quaternary structure, homotetramer. It depends on FAD as a cofactor.

The enzyme catalyses dUMP + (6R)-5,10-methylene-5,6,7,8-tetrahydrofolate + NADPH + H(+) = dTMP + (6S)-5,6,7,8-tetrahydrofolate + NADP(+). It participates in pyrimidine metabolism; dTTP biosynthesis. Its function is as follows. Catalyzes the reductive methylation of 2'-deoxyuridine-5'-monophosphate (dUMP) to 2'-deoxythymidine-5'-monophosphate (dTMP) while utilizing 5,10-methylenetetrahydrofolate (mTHF) as the methyl donor, and NADPH and FADH(2) as the reductant. The sequence is that of Flavin-dependent thymidylate synthase from Ehrlichia ruminantium (strain Welgevonden).